A 310-amino-acid polypeptide reads, in one-letter code: Syntaxin-related protein KNOLLE (310 aa).

At methionine 1 the chain carries N-acetylmethionine. Residues 1–283 lie on the Cytoplasmic side of the membrane; that stretch reads MNDLMTKSFM…AKSHQRNSRK (283 aa). A coiled-coil region spans residues 94–159; it reads NEIVSGLRKA…FQGLRQKMMS (66 aa). One can recognise a t-SNARE coiled-coil homology domain in the interval 212 to 274; sequence VVEIQDRYDA…ADGANELKTA (63 aa). A helical; Anchor for type IV membrane protein transmembrane segment spans residues 284 to 304; it reads WMCIGIIVLLLIILIVVIPII. The Vesicular segment spans residues 305–310; the sequence is TSFSSS.

The protein belongs to the syntaxin family. As to quaternary structure, interacts with SNAP33 and/or NPSN11 to form a t-SNARE complex and with KEULE. In terms of tissue distribution, abundant in flowers and developing siliques. A low level expression is seen in the seedlings, roots, and leaves.

Its subcellular location is the membrane. Functionally, involved in cytokinesis. Acts as a cell plate-specific syntaxin, required for the fusion of vesicles at the plane of cell division. The polypeptide is Syntaxin-related protein KNOLLE (KN) (Arabidopsis thaliana (Mouse-ear cress)).